Consider the following 457-residue polypeptide: UDP-glycosyltransferase 72C1 (457 aa).

UDP-alpha-D-glucose is bound by residues S272, 343–344 (WA), 361–369 (HCGWNSVLE), and 383–386 (YSEQ).

The protein belongs to the UDP-glycosyltransferase family.

The sequence is that of UDP-glycosyltransferase 72C1 (UGT72C1) from Arabidopsis thaliana (Mouse-ear cress).